The sequence spans 276 residues: Large ribosomal subunit protein uL2 (276 aa).

The disordered stretch occupies residues 224–276 (VAMNPVDHPHGGGEGKTGEGRVPVSPWGTPTKGYRTRRNKRTTSMIVQRRQKR). Positions 230 to 242 (DHPHGGGEGKTGE) are enriched in basic and acidic residues.

This sequence belongs to the universal ribosomal protein uL2 family. In terms of assembly, part of the 50S ribosomal subunit. Forms a bridge to the 30S subunit in the 70S ribosome.

Its function is as follows. One of the primary rRNA binding proteins. Required for association of the 30S and 50S subunits to form the 70S ribosome, for tRNA binding and peptide bond formation. It has been suggested to have peptidyltransferase activity; this is somewhat controversial. Makes several contacts with the 16S rRNA in the 70S ribosome. In Polynucleobacter asymbioticus (strain DSM 18221 / CIP 109841 / QLW-P1DMWA-1) (Polynucleobacter necessarius subsp. asymbioticus), this protein is Large ribosomal subunit protein uL2.